A 224-amino-acid chain; its full sequence is Beta-casein (224 aa).

The first 15 residues, 1 to 15 (MKVLILACLVALALA), serve as a signal peptide directing secretion. A phosphoserine mark is found at S30, S32, S33, and S34. Residue S50 is modified to Phosphoserine; in variant A1, variant A2, variant A3, variant B, variant E, variant F, variant G and variant H.

This sequence belongs to the beta-casein family. In terms of tissue distribution, mammary gland specific. Secreted in milk.

The protein localises to the secreted. Important role in determination of the surface properties of the casein micelles. Its function is as follows. Casoparan acts as a macrophage activator, increasing the phagocytic activity of macrophages and peroxide release from macrophages. It also acts as a bradykinin-potentiating peptide. Functionally, casohypotensin acts as a bradykinin-potentiating peptide. Induces hypotension in rats. Acts as a strong competitive inhibitor of endo-oligopeptidase A. In terms of biological role, antioxidant peptide has antioxidant activity. This is Beta-casein (CSN2) from Bos taurus (Bovine).